We begin with the raw amino-acid sequence, 244 residues long: Orotidine 5'-phosphate decarboxylase (244 aa).

Substrate is bound by residues Asp-18, Lys-43, 73–82, Ser-130, 182–192, Gly-206, and Arg-207; these read DLKLADIGYI and PGVGAQGGKPG. Residue Lys-75 is the Proton donor of the active site.

Belongs to the OMP decarboxylase family. Type 1 subfamily. As to quaternary structure, homodimer.

It catalyses the reaction orotidine 5'-phosphate + H(+) = UMP + CO2. It functions in the pathway pyrimidine metabolism; UMP biosynthesis via de novo pathway; UMP from orotate: step 2/2. Functionally, catalyzes the decarboxylation of orotidine 5'-monophosphate (OMP) to uridine 5'-monophosphate (UMP). This is Orotidine 5'-phosphate decarboxylase from Aeropyrum pernix (strain ATCC 700893 / DSM 11879 / JCM 9820 / NBRC 100138 / K1).